The following is a 372-amino-acid chain: Cyanuric acid amidohydrolase (372 aa).

Residues 1–105 (MPTTLRRAHV…IVFEAREVDE (105 aa)) are RU A. Residues Arg-56 and 84 to 85 (SG) each bind substrate. The segment at 115-252 (SLALGRARTP…HEIMVAGMSR (138 aa)) is RU B. Residue Lys-165 is part of the active site. Residues Arg-197 and 235-236 (SG) each bind substrate. The active-site Nucleophile is the Ser-235. The interval 258-372 (LAIDHGVMRD…GPVAIIVERT (115 aa)) is RU C. Glu-305 contributes to the Mg(2+) binding site. Substrate contacts are provided by residues Arg-332 and 351-352 (SG). Positions 354, 357, 358, 359, and 362 each coordinate Mg(2+).

Belongs to the cyclic amide hydrolase (CyAH) family. Homotetramer.

It carries out the reaction cyanurate + H2O = 1-carboxybiuret + H(+). The protein operates within xenobiotic degradation; atrazine degradation; biuret from cyanurate: step 1/1. Its activity is regulated as follows. Inhibited by barbituric acid. Responsible for the hydrolysis of cyanuric acid, an intermediate formed during catabolism of s-triazine based compounds in herbicides such as atrazine and polymers such as melamine. Catalyzes the hydrolytic opening of the s-triazine ring of cyanuric acid (2,4,6-trihydroxy-s-triazine) to yield carbon dioxide and carboxybiuret, which spontaneously decarboxylates to biuret. The sequence is that of Cyanuric acid amidohydrolase from Bradyrhizobium sp. (strain ORS 375).